A 206-amino-acid polypeptide reads, in one-letter code: Small ribosomal subunit protein uS4 (206 aa).

Residues 96–156 (SRLDNVVYRM…EKSRNQSRIA (61 aa)) form the S4 RNA-binding domain.

It belongs to the universal ribosomal protein uS4 family. As to quaternary structure, part of the 30S ribosomal subunit. Contacts protein S5. The interaction surface between S4 and S5 is involved in control of translational fidelity.

One of the primary rRNA binding proteins, it binds directly to 16S rRNA where it nucleates assembly of the body of the 30S subunit. Functionally, with S5 and S12 plays an important role in translational accuracy. The chain is Small ribosomal subunit protein uS4 from Hydrogenovibrio crunogenus (strain DSM 25203 / XCL-2) (Thiomicrospira crunogena).